The chain runs to 548 residues: Organic cation transporter protein (548 aa).

Topologically, residues 1 to 22 are cytoplasmic; the sequence is MGYDDVITHLGEFGPYQKRIYY. Residues 23 to 43 traverse the membrane as a helical segment; it reads LLCLPAIVCAFHKLAGVFLLA. At 44–127 the chain is on the extracellular side; sequence KPDFRCALPY…TEWNLVCSRS (84 aa). N55, N67, N89, and N97 each carry an N-linked (GlcNAc...) asparagine glycan. The helical transmembrane segment at 128 to 148 threads the bilayer; the sequence is LLSATSDSLFMLGVLLGSLIF. The Cytoplasmic portion of the chain corresponds to 149 to 158; it reads GQMSDKLGRK. Residues 159-179 form a helical membrane-spanning segment; the sequence is PTFFASLVLQLIFGVLAAVAP. Over 180-189 the chain is Extracellular; the sequence is EYFSYTISRM. Residues 190 to 210 form a helical membrane-spanning segment; the sequence is IVGATTSGVFLVAYVIALEMV. Residues 211 to 219 are Cytoplasmic-facing; sequence GSSYRLFAG. Residues 220 to 240 form a helical membrane-spanning segment; that stretch reads VAMQMFFSVGFMLTAGFAYFI. The Extracellular portion of the chain corresponds to 241-244; sequence HDWR. Residues 245 to 265 form a helical membrane-spanning segment; the sequence is WLQIAITLPGLLFLCYYWIIP. The Cytoplasmic portion of the chain corresponds to 266–337; the sequence is ESARWLLMKG…LLRYPNLRRK (72 aa). The chain crosses the membrane as a helical span at residues 338-358; that stretch reads TLLIFFDWFVNSGVYYGLSWN. Residues 359–366 are Extracellular-facing; that stretch reads TNNLGGNQ. A helical membrane pass occupies residues 367 to 387; that stretch reads LVNFMISGAVEIPGYTLLLFT. At 388–395 the chain is on the cytoplasmic side; the sequence is LNRWGRRS. Residues 396-416 form a helical membrane-spanning segment; it reads ILCGTMMVAGISLLATIFVPS. The Extracellular segment spans residues 417–419; the sequence is DMN. A helical transmembrane segment spans residues 420–440; sequence WLIVACAMIGKLAITSSYGTI. Residues 441 to 453 are Cytoplasmic-facing; it reads YIFSAEQFPTVVR. A helical membrane pass occupies residues 454 to 474; it reads NVGLGASSMVARVGGILAPYL. Topologically, residues 475 to 482 are extracellular; sequence KLLGEIWR. Residues 483-503 form a helical membrane-spanning segment; that stretch reads PLPLIICGALSLTAGLLSLLL. The Cytoplasmic portion of the chain corresponds to 504 to 548; it reads PETLNKPMPETIEDGENFGKKPAPQETAEEGGTQELSGMLNGKSG. The tract at residues 512-548 is disordered; it reads PETIEDGENFGKKPAPQETAEEGGTQELSGMLNGKSG.

This sequence belongs to the major facilitator (TC 2.A.1) superfamily. Organic cation transporter (TC 2.A.1.19) family. Expressed in embryos and adults at low level. Expressed at higher level in third instar larvae.

The protein resides in the membrane. Functionally, probably transports organic cations. The protein is Organic cation transporter protein (Orct) of Drosophila melanogaster (Fruit fly).